Reading from the N-terminus, the 176-residue chain is Endoribonuclease YbeY (176 aa).

Residues histidine 138, histidine 142, and histidine 148 each contribute to the Zn(2+) site.

Belongs to the endoribonuclease YbeY family. It depends on Zn(2+) as a cofactor.

The protein resides in the cytoplasm. In terms of biological role, single strand-specific metallo-endoribonuclease involved in late-stage 70S ribosome quality control and in maturation of the 3' terminus of the 16S rRNA. This chain is Endoribonuclease YbeY, found in Trichormus variabilis (strain ATCC 29413 / PCC 7937) (Anabaena variabilis).